Consider the following 311-residue polypeptide: Apolipoprotein E (311 aa).

The N-terminal stretch at 1–18 (MKALWAVLLVTLLTGCLA) is a signal peptide. Tandem repeats lie at residues 72–93 (ALMEDTMTEVKAYKKELEEQLG), 94–115 (PVAEETRARLGKEVQAAQARLG), 116–137 (ADMEDLRNRLGQYRNEVHTMLG), 138–159 (QSTEEIRARLSTHLRKMRKRLM), 160–181 (RDAEDLQKRLAVYKAGAREGAE), 182–203 (RGVSAIRERLGPLVEQGRQRTA), 204–225 (NLGAGAAQPLRDRAQAFGDRIR), and 226–247 (GRLEEVGNQARDRLEEVREHME). Residues 72 to 247 (ALMEDTMTEV…RLEEVREHME (176 aa)) form an 8 X 22 AA approximate tandem repeats region. A Methionine sulfoxide modification is found at Met-135. The residue at position 139 (Ser-139) is a Phosphoserine. An LDL and other lipoprotein receptors binding region spans residues 150 to 160 (HLRKMRKRLMR). A heparin-binding site is contributed by 154–157 (MRKR). Residues 202-282 (TANLGAGAAQ…GWFEPIVEDM (81 aa)) form a lipid-binding and lipoprotein association region. A heparin-binding site is contributed by 221–228 (GDRIRGRL). Residues 258–311 (QQIRLQAEIFQARLKGWFEPIVEDMHRQWANLMEKIQASVATNPIITPVAQENQ) are homooligomerization. Residues 270–282 (RLKGWFEPIVEDM) form a specificity for association with VLDL region.

The protein belongs to the apolipoprotein A1/A4/E family. In terms of assembly, homotetramer. May interact with ABCA1; functionally associated with ABCA1 in the biogenesis of HDLs. May interact with APP/A4 amyloid-beta peptide; the interaction is extremely stable in vitro but its physiological significance is unclear. May interact with MAPT. May interact with MAP2. In the cerebrospinal fluid, interacts with secreted SORL1. Interacts with PMEL; this allows the loading of PMEL luminal fragment on ILVs to induce fibril nucleation. In terms of processing, APOE exists as multiple glycosylated and sialylated glycoforms within cells and in plasma. The extent of glycosylation and sialylation are tissue and context specific. Post-translationally, glycated in plasma VLDL. Phosphorylated by FAM20C in the extracellular medium.

Its subcellular location is the secreted. The protein resides in the extracellular space. The protein localises to the extracellular matrix. It localises to the extracellular vesicle. It is found in the endosome. Its subcellular location is the multivesicular body. Functionally, APOE is an apolipoprotein, a protein associating with lipid particles, that mainly functions in lipoprotein-mediated lipid transport between organs via the plasma and interstitial fluids. APOE is a core component of plasma lipoproteins and is involved in their production, conversion and clearance. Apolipoproteins are amphipathic molecules that interact both with lipids of the lipoprotein particle core and the aqueous environment of the plasma. As such, APOE associates with chylomicrons, chylomicron remnants, very low density lipoproteins (VLDL) and intermediate density lipoproteins (IDL) but shows a preferential binding to high-density lipoproteins (HDL). It also binds a wide range of cellular receptors including the LDL receptor/LDLR and the very low-density lipoprotein receptor/VLDLR that mediate the cellular uptake of the APOE-containing lipoprotein particles. Finally, APOE also has a heparin-binding activity and binds heparan-sulfate proteoglycans on the surface of cells, a property that supports the capture and the receptor-mediated uptake of APOE-containing lipoproteins by cells. The polypeptide is Apolipoprotein E (Apoe) (Mus musculus (Mouse)).